The sequence spans 289 residues: Serine/threonine-protein phosphatase Pgam5, mitochondrial (289 aa).

The protein belongs to the phosphoglycerate mutase family. BPG-dependent PGAM subfamily. Interacts with Pk92B/ASK1.

The protein localises to the mitochondrion outer membrane. The catalysed reaction is O-phospho-L-seryl-[protein] + H2O = L-seryl-[protein] + phosphate. It catalyses the reaction O-phospho-L-threonyl-[protein] + H2O = L-threonyl-[protein] + phosphate. Its function is as follows. Displays phosphatase activity for serine/threonine residues, and dephosphorylates and activates Pk92B kinase. Has apparently no phosphoglycerate mutase activity. This Drosophila mojavensis (Fruit fly) protein is Serine/threonine-protein phosphatase Pgam5, mitochondrial.